The following is a 91-amino-acid chain: Small ribosomal subunit protein uS19 (91 aa).

The protein belongs to the universal ribosomal protein uS19 family.

Its function is as follows. Protein S19 forms a complex with S13 that binds strongly to the 16S ribosomal RNA. This chain is Small ribosomal subunit protein uS19, found in Prochlorococcus marinus (strain MIT 9515).